We begin with the raw amino-acid sequence, 769 residues long: Integrin beta-8 (769 aa).

Positions 1 to 42 (MCGSALAFFTAAFVCLQNDRRGPASFLWAAWVFSLVLGLGQG) are cleaved as a signal peptide. Topologically, residues 43-684 (EDNRCASSNA…ECFSSPSYLR (642 aa)) are extracellular. Residues 46-95 (RCASSNAASCARCLALGPECGWCVQEDFISGGSRSERCDIVSNLISKGCS) form the PSI domain. Cystine bridges form between cysteine 47-cysteine 65, cysteine 55-cysteine 469, cysteine 58-cysteine 83, cysteine 68-cysteine 94, cysteine 211-cysteine 218, cysteine 266-cysteine 307, cysteine 407-cysteine 419, cysteine 439-cysteine 467, cysteine 471-cysteine 491, cysteine 471-cysteine 494, cysteine 481-cysteine 494, cysteine 499-cysteine 528, cysteine 511-cysteine 526, cysteine 520-cysteine 531, cysteine 533-cysteine 546, cysteine 553-cysteine 567, cysteine 561-cysteine 572, cysteine 574-cysteine 583, cysteine 585-cysteine 609, cysteine 593-cysteine 607, cysteine 601-cysteine 612, cysteine 614-cysteine 624, cysteine 627-cysteine 630, cysteine 634-cysteine 661, and cysteine 640-cysteine 657. The VWFA domain maps to 146 to 384 (PVDLYYLVDV…NLVVEAYQKL (239 aa)). Residues aspartate 154 and serine 156 each contribute to the Mg(2+) site. Position 193 (aspartate 193) interacts with Ca(2+). Asparagine 233 carries an N-linked (GlcNAc...) asparagine glycan. Residues asparagine 249, aspartate 251, proline 253, and glutamate 254 each coordinate Ca(2+). Residue glutamate 254 coordinates Mg(2+). N-linked (GlcNAc...) asparagine glycosylation is present at asparagine 402. N-linked (GlcNAc...) asparagine glycans are attached at residues asparagine 421, asparagine 431, asparagine 456, and asparagine 466. I-EGF domains follow at residues 471 to 495 (CEDNRGPKGKCVDETFLDSKCFQCD), 499 to 547 (CHFD…KYCE), 548 to 584 (KDDFSCPYHHGNLCAGHGECEAGRCQCFSGWEGDRCQ), and 585 to 625 (CPSA…RFCE). An N-linked (GlcNAc...) asparagine glycan is attached at asparagine 648. A helical transmembrane segment spans residues 685–704 (IFFIIFIVTFLIGLLKVLII). The Cytoplasmic segment spans residues 705 to 769 (RQVILQWNSN…NAHETFRCNF (65 aa)).

It belongs to the integrin beta chain family. Heterodimer of an alpha and a beta subunit. Beta-8 (ITGB8) associates with alpha-V (ITGAV) to form ITGAV:ITGB8. ITGAV:ITGB8 interacts with TGFB1. Placenta, kidney, brain, ovary, uterus and in several transformed cells. Transiently expressed in 293 human embryonic kidney cells.

Its subcellular location is the cell membrane. Integrin alpha-V:beta-8 (ITGAV:ITGB8) is a receptor for fibronectin. It recognizes the sequence R-G-D in its ligands. Integrin alpha-V:beta-6 (ITGAV:ITGB6) mediates R-G-D-dependent release of transforming growth factor beta-1 (TGF-beta-1) from regulatory Latency-associated peptide (LAP), thereby playing a key role in TGF-beta-1 activation on the surface of activated regulatory T-cells (Tregs). Required during vasculogenesis. This is Integrin beta-8 from Homo sapiens (Human).